The sequence spans 54 residues: Rubredoxin (54 aa).

The 54-residue stretch at 1 to 54 (MKKYQCIVCGWIYDEAEGWPQDGIAPGTKWEDIPDDWTCPDCGVSKVDFEMIEV) folds into the Rubredoxin-like domain. Fe cation is bound by residues Cys-6, Cys-9, Cys-39, and Cys-42.

It belongs to the rubredoxin family. Fe(3+) is required as a cofactor.

Its subcellular location is the cytoplasm. It functions in the pathway hydrocarbon metabolism; alkane degradation. Its function is as follows. Involved in the hydrocarbon hydroxylating system, which transfers electrons from NADH to rubredoxin reductase and then through rubredoxin to alkane 1 monooxygenase. This chain is Rubredoxin (rubA), found in Acinetobacter baylyi (strain ATCC 33305 / BD413 / ADP1).